Consider the following 74-residue polypeptide: CLAVATA3/ESR (CLE)-related protein 1 (74 aa).

The signal sequence occupies residues 1 to 22 (MANLKFLLCLFLICVSLSRSSA). Asparagine 59 is a glycosylation site (N-linked (GlcNAc...) asparagine). Residues proline 66 and proline 69 each carry the hydroxyproline modification. Proline 69 carries O-linked (Ara...) hydroxyproline glycosylation.

Belongs to the CLV3/ESR signal peptide family. In terms of processing, the O-glycosylation (arabinosylation) of the hydroxyproline Pro-69 enhances binding affinity of the CLE1p peptide for its receptor. In terms of tissue distribution, mostly expressed in roots and seedlings, and, to a lower extent, in stems and apex.

It is found in the secreted. Its subcellular location is the extracellular space. In terms of biological role, extracellular signal peptide that regulates cell fate. The protein is CLAVATA3/ESR (CLE)-related protein 1 of Arabidopsis thaliana (Mouse-ear cress).